The chain runs to 122 residues: Small ribosomal subunit protein uS13 (122 aa).

The tract at residues 94 to 122 (GLPVRGQSTQKNARTRKGPRKTVAGKKGK) is disordered. Basic residues predominate over residues 106–122 (ARTRKGPRKTVAGKKGK).

The protein belongs to the universal ribosomal protein uS13 family. Part of the 30S ribosomal subunit. Forms a loose heterodimer with protein S19. Forms two bridges to the 50S subunit in the 70S ribosome.

In terms of biological role, located at the top of the head of the 30S subunit, it contacts several helices of the 16S rRNA. In the 70S ribosome it contacts the 23S rRNA (bridge B1a) and protein L5 of the 50S subunit (bridge B1b), connecting the 2 subunits; these bridges are implicated in subunit movement. Contacts the tRNAs in the A and P-sites. The sequence is that of Small ribosomal subunit protein uS13 from Mycoplasmopsis synoviae (strain 53) (Mycoplasma synoviae).